A 386-amino-acid polypeptide reads, in one-letter code: MAP kinase-activated protein kinase 2 (386 aa).

A disordered region spans residues 1-29 (MLSGSPGQTPPAPFPSPPPPAPAQPPPPF). The segment covering 8–29 (QTPPAPFPSPPPPAPAQPPPPF) has biased composition (pro residues). The region spanning 50–311 (KVTSQVLGLG…ITEFMNHPWI (262 aa)) is the Protein kinase domain. ATP is bound by residues 56–64 (LGLGINGKV) and lysine 79. A staurosporine-binding site is contributed by 125–127 (ECL). Aspartate 172 acts as the Proton acceptor in catalysis. Residue threonine 208 is modified to Phosphothreonine; by MAPK14. Position 258 is a phosphoserine; by MAPK14 (serine 258). Serine 314 bears the Phosphoserine; by autocatalysis mark. The autoinhibitory helix stretch occupies residues 314-350 (STKVPQTPLHTSRVLKEDKERWEDVKEEMTSALATMR). Residue threonine 320 is modified to Phosphothreonine; by MAPK14. 2 consecutive short sequence motifs (nuclear export signal (NES)) follow at residues 331-354 (DKERWEDVKEEMTSALATMRVDYE) and 342-351 (MTSALATMRV). Lysine 339 participates in a covalent cross-link: Glycyl lysine isopeptide (Lys-Gly) (interchain with G-Cter in SUMO). Residues 352–376 (DYEQIKIKKIEDASNPLLLKRRKKA) form a p38 MAPK-binding site region. 2 consecutive short sequence motifs (bipartite nuclear localization signal) follow at residues 357-360 (KIKK) and 371-375 (KRRKK).

This sequence belongs to the protein kinase superfamily. CAMK Ser/Thr protein kinase family. Heterodimer with p38-alpha/MAPK14; this heterodimer forms a stable complex: molecules are positioned 'face to face' so that the ATP-binding sites of both kinases are at the heterodimer interface. Interacts with PHC2. Interacts with HSF1. Post-translationally, sumoylation inhibits the protein kinase activity. Phosphorylated and activated by MAP kinase p38-alpha/MAPK14 at Thr-208; Ser-258 and Thr-320. In terms of tissue distribution, ubiquitously expressed (at protein level).

The protein resides in the cytoplasm. It localises to the nucleus. It catalyses the reaction L-seryl-[protein] + ATP = O-phospho-L-seryl-[protein] + ADP + H(+). The enzyme catalyses L-threonyl-[protein] + ATP = O-phospho-L-threonyl-[protein] + ADP + H(+). Its activity is regulated as follows. Activated following phosphorylation by p38-alpha/MAPK14 following various stresses. Inhibited following sumoylation. Specifically inhibited by pyrrolopyridine inhibitors. Stress-activated serine/threonine-protein kinase involved in cytokine production, endocytosis, reorganization of the cytoskeleton, cell migration, cell cycle control, chromatin remodeling, DNA damage response and transcriptional regulation. Following stress, it is phosphorylated and activated by MAP kinase p38-alpha/MAPK14, leading to phosphorylation of substrates. Phosphorylates serine in the peptide sequence, Hyd-X-R-X(2)-S, where Hyd is a large hydrophobic residue. Phosphorylates ALOX5, CDC25B, CDC25C, CEP131, ELAVL1, HNRNPA0, HSP27/HSPB1, KRT18, KRT20, LIMK1, LSP1, PABPC1, PARN, PDE4A, RCSD1, RPS6KA3, TAB3 and TTP/ZFP36. Phosphorylates HSF1; leading to the interaction with HSP90 proteins and inhibiting HSF1 homotrimerization, DNA-binding and transactivation activities. Mediates phosphorylation of HSP27/HSPB1 in response to stress, leading to dissociation of HSP27/HSPB1 from large small heat-shock protein (sHsps) oligomers and impairment of their chaperone activities and ability to protect against oxidative stress effectively. Involved in inflammatory response by regulating tumor necrosis factor (TNF) and IL6 production post-transcriptionally: acts by phosphorylating AU-rich elements (AREs)-binding proteins ELAVL1, HNRNPA0, PABPC1 and TTP/ZFP36, leading to regulation of the stability and translation of TNF and IL6 mRNAs. Phosphorylation of TTP/ZFP36, a major post-transcriptional regulator of TNF, promotes its binding to 14-3-3 proteins and reduces its ARE mRNA affinity leading to inhibition of dependent degradation of ARE-containing transcripts. Phosphorylates CEP131 in response to cellular stress following ultraviolet irradiation which promotes binding of CEP131 to 14-3-3 proteins and inhibits formation of novel centriolar satellites. Also involved in late G2/M checkpoint following DNA damage through a process of post-transcriptional mRNA stabilization: following DNA damage, relocalizes from nucleus to cytoplasm and phosphorylates HNRNPA0 and PARN, leading to stabilization of GADD45A mRNA. Involved in toll-like receptor signaling pathway (TLR) in dendritic cells: required for acute TLR-induced macropinocytosis by phosphorylating and activating RPS6KA3. This is MAP kinase-activated protein kinase 2 (Mapkapk2) from Mus musculus (Mouse).